Reading from the N-terminus, the 400-residue chain is Sensor histidine kinase LnrJ (400 aa).

Residues 1–2 (MK) lie on the Extracellular side of the membrane. Residues 3-23 (ALFFTRMFTLMVSCLMYLSIV) traverse the membrane as a helical segment. Over 24-27 (KEDN) the chain is Cytoplasmic. Residues 28 to 48 (WFGYVFIAAGAAMYAANHVLL) traverse the membrane as a helical segment. Over 49-61 (TKETNAIWFCLID) the chain is Extracellular. A helical membrane pass occupies residues 62-82 (IAIGFSFGFIFPGTGLFIIML). The Cytoplasmic segment spans residues 83 to 101 (CPVAVAFFLRGFPKRTAWS). A helical membrane pass occupies residues 102-122 (VLCLSSILFLTVLIRTYAMFG). Topologically, residues 123–125 (NEF) are extracellular. A helical membrane pass occupies residues 126 to 146 (VIDHLTSMTFVVFCGVVGKLI). Residues 147-400 (RKLLDAQDTA…GPVQQKESLS (254 aa)) lie on the Cytoplasmic side of the membrane. The Histidine kinase domain maps to 190 to 385 (IYERNRMARE…TVNAEFSLAN (196 aa)). Histidine 201 carries the phosphohistidine; by autocatalysis modification.

In terms of processing, autophosphorylated.

Its subcellular location is the cell membrane. The enzyme catalyses ATP + protein L-histidine = ADP + protein N-phospho-L-histidine.. Required for resistance to linearmycins, a family of antibiotic-specialized metabolites produced by some streptomycetes. Member of the two-component regulatory system LnrJ/LnrK, which induces expression of the LnrLMN ABC transporter in response to linearmycins and other polyenes. Acts as a specific sensor for linearmycin, either directly through binding or indirectly through membrane perturbation. Probably activates LnrK by phosphorylation. May also promote biofilm formation. This Bacillus subtilis (strain 168) protein is Sensor histidine kinase LnrJ.